Consider the following 393-residue polypeptide: 4-hydroxyphenylpyruvate dioxygenase (393 aa).

VOC domains are found at residues 17–148 (AFDH…LLER) and 179–339 (FLDH…IFSK). Fe cation-binding residues include His182, His267, and Glu350.

This sequence belongs to the 4HPPD family. Requires Fe cation as cofactor.

The catalysed reaction is 3-(4-hydroxyphenyl)pyruvate + O2 = homogentisate + CO2. The protein operates within amino-acid degradation; L-phenylalanine degradation; acetoacetate and fumarate from L-phenylalanine: step 3/6. Functionally, key enzyme in the degradation of tyrosine. This chain is 4-hydroxyphenylpyruvate dioxygenase (hpd-1), found in Caenorhabditis briggsae.